The chain runs to 316 residues: Putative ring-cleaving dioxygenase MhqA (316 aa).

2 consecutive VOC domains span residues 5–131 (GIHH…LTAD) and 154–278 (GLGP…LSTD). Positions 8, 226, and 274 each coordinate Fe cation.

The protein belongs to the extradiol ring-cleavage dioxygenase family. It depends on Fe(2+) as a cofactor.

Its subcellular location is the cytoplasm. Functionally, putative ring-cleavage dioxygenase that may contribute to the degradation of aromatic compounds. The chain is Putative ring-cleaving dioxygenase MhqA (mhqA) from Bacillus subtilis (strain 168).